A 333-amino-acid polypeptide reads, in one-letter code: Protoheme IX farnesyltransferase (333 aa).

The next 8 membrane-spanning stretches (helical) occupy residues 63-83 (LACT…LNCI), 109-129 (AAFI…VSGV), 132-152 (LAAG…TAIL), 160-180 (IVIG…AASG), 188-208 (WLFS…ALLL), 214-234 (AVGI…RAIS), 245-265 (GFGV…LIPF), and 292-312 (WSIF…LPMA).

Belongs to the UbiA prenyltransferase family. Protoheme IX farnesyltransferase subfamily.

The protein localises to the cell inner membrane. The enzyme catalyses heme b + (2E,6E)-farnesyl diphosphate + H2O = Fe(II)-heme o + diphosphate. Its pathway is porphyrin-containing compound metabolism; heme O biosynthesis; heme O from protoheme: step 1/1. Its function is as follows. Converts heme B (protoheme IX) to heme O by substitution of the vinyl group on carbon 2 of heme B porphyrin ring with a hydroxyethyl farnesyl side group. In Prochlorococcus marinus (strain MIT 9313), this protein is Protoheme IX farnesyltransferase.